A 357-amino-acid polypeptide reads, in one-letter code: Cyclic AMP-responsive element-binding protein 5 (357 aa).

A disordered region spans residues 114 to 239 (RQDQTPHHHL…FLERNRAAAT (126 aa)). 2 stretches are compositionally biased toward basic residues: residues 120–129 (HHHLHSHPHQ) and 138–175 (PYPH…HPAH). The segment covering 186 to 195 (TGNQAQVSPA) has biased composition (polar residues). Residues 196–206 (TQQMQPTQTIQ) show a composition bias toward low complexity. Residues 218 to 235 (VVDEDPDERRRKFLERNR) are compositionally biased toward basic and acidic residues. A bZIP domain is found at 224-287 (DERRRKFLER…AQLKQLLLTH (64 aa)). The tract at residues 226 to 246 (RRRKFLERNRAAATRCRQKRK) is basic motif. The leucine-zipper stretch occupies residues 252-280 (LEKKAEELTQTNMQLQNEVSMLKNEVAQL). A disordered region spans residues 298–318 (ESQGYLSPESSPPASPVPACS).

Belongs to the bZIP family. In terms of assembly, binds DNA as a homodimer or as a heterodimer with JUN or ATF2/CREBP1.

Its subcellular location is the nucleus. Functionally, binds to the cAMP response element and activates transcription. In Mus musculus (Mouse), this protein is Cyclic AMP-responsive element-binding protein 5 (Creb5).